Reading from the N-terminus, the 301-residue chain is Diaminopimelate epimerase (301 aa).

Residues asparagine 15, glutamine 47, and asparagine 67 each contribute to the substrate site. Catalysis depends on cysteine 76, which acts as the Proton donor. Substrate contacts are provided by residues glycine 77–asparagine 78, asparagine 163, asparagine 197, and glutamate 215–arginine 216. Cysteine 224 serves as the catalytic Proton acceptor. Glycine 225–serine 226 provides a ligand contact to substrate. The segment at serine 280–arginine 301 is disordered.

This sequence belongs to the diaminopimelate epimerase family. Homodimer.

The protein localises to the cytoplasm. The catalysed reaction is (2S,6S)-2,6-diaminopimelate = meso-2,6-diaminopimelate. The protein operates within amino-acid biosynthesis; L-lysine biosynthesis via DAP pathway; DL-2,6-diaminopimelate from LL-2,6-diaminopimelate: step 1/1. In terms of biological role, catalyzes the stereoinversion of LL-2,6-diaminopimelate (L,L-DAP) to meso-diaminopimelate (meso-DAP), a precursor of L-lysine and an essential component of the bacterial peptidoglycan. The protein is Diaminopimelate epimerase of Rhizobium leguminosarum bv. trifolii (strain WSM2304).